We begin with the raw amino-acid sequence, 101 residues long: MIPGEVFSAPGEIILNDGLPVTTLVVANTGDRPVQIGSHYHFAEANPLLQFDREAARGQRLDIPAGTAIRFEPGQSREVPLIPYRGARIVHGFRNETGEAL.

Belongs to the urease beta subunit family. Heterotrimer of UreA (gamma), UreB (beta) and UreC (alpha) subunits. Three heterotrimers associate to form the active enzyme.

It is found in the cytoplasm. The enzyme catalyses urea + 2 H2O + H(+) = hydrogencarbonate + 2 NH4(+). It participates in nitrogen metabolism; urea degradation; CO(2) and NH(3) from urea (urease route): step 1/1. This Granulibacter bethesdensis (strain ATCC BAA-1260 / CGDNIH1) protein is Urease subunit beta.